We begin with the raw amino-acid sequence, 557 residues long: Probable protein kinase UbiB (557 aa).

The 389-residue stretch at 121 to 509 (SFDTVPLASA…RKLQTRVVTA (389 aa)) folds into the Protein kinase domain. ATP-binding positions include 127–135 (LASASIAQV) and Lys154. Asp289 acts as the Proton acceptor in catalysis. 2 helical membrane-spanning segments follow: residues 506–526 (VVTA…YGLH) and 535–555 (VPVW…VAWL).

This sequence belongs to the ABC1 family. UbiB subfamily.

It is found in the cell inner membrane. Its pathway is cofactor biosynthesis; ubiquinone biosynthesis [regulation]. Functionally, is probably a protein kinase regulator of UbiI activity which is involved in aerobic coenzyme Q (ubiquinone) biosynthesis. This is Probable protein kinase UbiB from Xanthomonas oryzae pv. oryzae (strain MAFF 311018).